Here is a 20-residue protein sequence, read N- to C-terminus: Hongotoxin-5 (20 aa).

This sequence belongs to the short scorpion toxin superfamily. Potassium channel inhibitor family. Alpha-KTx 02 subfamily. In terms of tissue distribution, expressed by the venom gland.

Its subcellular location is the secreted. Functionally, potent selective inhibitor of Kv1/KCNA voltage-gated potassium channels. In Centruroides limbatus (Bark scorpion), this protein is Hongotoxin-5.